A 510-amino-acid polypeptide reads, in one-letter code: Replication factor C large subunit (510 aa).

48-55 contributes to the ATP binding site; it reads GPPGTGKT. A disordered region spans residues 459-510; sequence MESMLERKREESEVEEEAKEIEEAVEKAEEEEEREEKKKEGGGEQRTLDAFF. Over residues 493–510 the composition is skewed to basic and acidic residues; that stretch reads EEKKKEGGGEQRTLDAFF.

The protein belongs to the activator 1 small subunits family. RfcL subfamily. In terms of assembly, heteromultimer composed of small subunits (RfcS) and large subunits (RfcL).

Part of the RFC clamp loader complex which loads the PCNA sliding clamp onto DNA. The chain is Replication factor C large subunit from Methanopyrus kandleri (strain AV19 / DSM 6324 / JCM 9639 / NBRC 100938).